The chain runs to 430 residues: MKETIDFLIDTIEARQVLDSRGNPTVEAEVFLECGASGIAIVPSGASTGAHEAHELRDGGSKYMGKGVLSAVNKIHETISPALCGLSALDQTAVDKLMTEIDGTLNKSNLGANSILAVSLATARASANALDIPLYRYLGDPLSNLLPVPLMNVINGGAHAPNSLDFQEFMLVPHGVNNFSESLRMGTEIFHSLKSLLDQKGLSTAVGDEGGFAPNLSSSEEAGDLLLEAIQKAGFKPGEQVSLALDAASTEFYNDGIYKYEGKSLNSSEMISYLSRLVSNYPIVSIEDGLAEDDWEGWSELNKELGDKVQLVGDDLFVTNTERLRKGIMEKSANSILIKVNQIGTLTETLEAIELAKMSGFTSVISHRSGETEDTTIADLSVATRSGQIKTGSLSRSERIAKYNRLLKIEEELGNQARFAGALGLGPKNI.

A (2R)-2-phosphoglycerate-binding site is contributed by glutamine 167. Catalysis depends on glutamate 209, which acts as the Proton donor. Mg(2+) is bound by residues aspartate 246, glutamate 287, and aspartate 314. Positions 339, 368, 369, and 390 each coordinate (2R)-2-phosphoglycerate. The active-site Proton acceptor is the lysine 339.

The protein belongs to the enolase family. Mg(2+) serves as cofactor.

The protein localises to the cytoplasm. The protein resides in the secreted. Its subcellular location is the cell surface. The enzyme catalyses (2R)-2-phosphoglycerate = phosphoenolpyruvate + H2O. It participates in carbohydrate degradation; glycolysis; pyruvate from D-glyceraldehyde 3-phosphate: step 4/5. Catalyzes the reversible conversion of 2-phosphoglycerate (2-PG) into phosphoenolpyruvate (PEP). It is essential for the degradation of carbohydrates via glycolysis. This Prochlorococcus marinus (strain MIT 9215) protein is Enolase.